An 817-amino-acid polypeptide reads, in one-letter code: E3 ubiquitin-protein ligase TRIM9 (817 aa).

Residues 10–50 form an RING-type zinc finger; the sequence is CPVCGSFYREPIILPCSHNLCQACARNILVQTPESESPQSR. Residue threonine 41 is modified to Phosphothreonine. Phosphoserine is present on residues serine 44, serine 46, serine 49, and serine 53. 2 B box-type zinc fingers span residues 163–212 and 224–266; these read AAAL…LVPP and RKVS…VKAL. Zn(2+)-binding residues include cysteine 168, cysteine 171, cysteine 193, histidine 198, cysteine 229, histidine 232, cysteine 252, and histidine 258. The stretch at 273 to 340 forms a coiled coil; it reads HKSQLSQALN…KAQLLARVNK (68 aa). A COS domain is found at 374–432; sequence IKENDPSGFLQISDALIRRVHLTEDQWGKGTLTPRMTTDFDLSLDNSPLLQSIHQLDFV. The Fibronectin type-III domain occupies 440 to 535; that stretch reads VPATPILQLE…KTLVLQTSEA (96 aa). The segment at 535–557 is disordered; the sequence is AAGAHETKPMKDTDSEEQTLPFP. The segment covering 537–547 has biased composition (basic and acidic residues); it reads GAHETKPMKDT. In terms of domain architecture, B30.2/SPRY spans 613–794; sequence ETQSASYSQL…VQVSLWAPGL (182 aa).

This sequence belongs to the TRIM/RBCC family. In terms of assembly, interacts with SNAP25. Post-translationally, auto-ubiquitinated. Brain. Expression is higher in the cerebral cortex and hippocampus (at protein level). Its expression is mainly confined to the central nervous system. The developing neocortex, the dorsal thalamus, the midbrain, the basal area of the hindbrain and spinal cord show high level of expression during embryogenesis. In adult brain, it is detected in the Purkinje cells of the cerebellum, in the hippocampus, and in the cortex.

The protein localises to the cytoplasm. It localises to the cell projection. It is found in the dendrite. The protein resides in the cytoplasmic vesicle. Its subcellular location is the secretory vesicle. The protein localises to the synaptic vesicle. It localises to the synapse. It is found in the cytoskeleton. It carries out the reaction S-ubiquitinyl-[E2 ubiquitin-conjugating enzyme]-L-cysteine + [acceptor protein]-L-lysine = [E2 ubiquitin-conjugating enzyme]-L-cysteine + N(6)-ubiquitinyl-[acceptor protein]-L-lysine.. Its pathway is protein modification; protein ubiquitination. Its function is as follows. E3 ubiquitin-protein ligase which ubiquitinates itself in cooperation with an E2 enzyme UBE2D2/UBC4 and serves as a targeting signal for proteasomal degradation. May play a role in regulation of neuronal functions. May act as a regulator of synaptic vesicle exocytosis by controlling the availability of SNAP25 for the SNARE complex formation. In Mus musculus (Mouse), this protein is E3 ubiquitin-protein ligase TRIM9 (Trim9).